The following is a 165-amino-acid chain: Protein SprT (165 aa).

Residues 20-163 (ENLAQANLKL…RCVHCGEPLV (144 aa)) enclose the SprT-like domain. His78 contacts Zn(2+). The active site involves Glu79. His82 contributes to the Zn(2+) binding site.

This sequence belongs to the SprT family. Zn(2+) is required as a cofactor.

Its subcellular location is the cytoplasm. In Salmonella arizonae (strain ATCC BAA-731 / CDC346-86 / RSK2980), this protein is Protein SprT.